We begin with the raw amino-acid sequence, 21 residues long: Bradykinin-potentiating peptide K12 (21 aa).

The interval Leu-1–Ala-21 is disordered.

Expressed by the venom gland.

It is found in the secreted. Inhibits angiotensin-converting enzyme (ACE), but does not serve as substrate for the enzyme. Potentiate bradykinin (BK) on the isolated guinea pig ileum as well as the isolated rat uterus for contraction. Also potentiates in vivo the depressor effect of BK on arterial blood pressure in the normotensive anesthetized rat. Intracerebroventricular injection into mice does not show toxic activity. The sequence is that of Bradykinin-potentiating peptide K12 from Buthus occitanus (Common European scorpion).